A 283-amino-acid chain; its full sequence is 5'-nucleotidase SurE (283 aa).

The a divalent metal cation site is built by aspartate 14, aspartate 15, serine 47, and asparagine 105.

This sequence belongs to the SurE nucleotidase family. Requires a divalent metal cation as cofactor.

The protein localises to the cytoplasm. It carries out the reaction a ribonucleoside 5'-phosphate + H2O = a ribonucleoside + phosphate. Functionally, nucleotidase that shows phosphatase activity on nucleoside 5'-monophosphates. This is 5'-nucleotidase SurE from Chlamydia trachomatis serovar A (strain ATCC VR-571B / DSM 19440 / HAR-13).